We begin with the raw amino-acid sequence, 446 residues long: N-succinylarginine dihydrolase (446 aa).

Substrate-binding positions include 19 to 28, asparagine 110, and 137 to 138; these read AGLSFGNVAS and HR. The active site involves glutamate 174. A substrate-binding site is contributed by arginine 213. Histidine 249 is an active-site residue. Substrate-binding residues include aspartate 251 and asparagine 364. The active-site Nucleophile is the cysteine 370.

It belongs to the succinylarginine dihydrolase family. As to quaternary structure, homodimer.

It carries out the reaction N(2)-succinyl-L-arginine + 2 H2O + 2 H(+) = N(2)-succinyl-L-ornithine + 2 NH4(+) + CO2. It functions in the pathway amino-acid degradation; L-arginine degradation via AST pathway; L-glutamate and succinate from L-arginine: step 2/5. Its function is as follows. Catalyzes the hydrolysis of N(2)-succinylarginine into N(2)-succinylornithine, ammonia and CO(2). The chain is N-succinylarginine dihydrolase from Burkholderia mallei (strain NCTC 10247).